Reading from the N-terminus, the 329-residue chain is Protein-arginine N-acetylglucosaminyltransferase NleB (329 aa).

N-beta-linked (GlcNAc) arginine; by autocatalysis glycosylation occurs at arginine 13. 48–50 provides a ligand contact to UDP-N-acetyl-alpha-D-glucosamine; that stretch reads QWF. Residue arginine 53 is glycosylated (N-beta-linked (GlcNAc) arginine; by autocatalysis). Tyrosine 72 is a UDP-N-acetyl-alpha-D-glucosamine binding site. The N-beta-linked (GlcNAc) arginine; by autocatalysis glycan is linked to arginine 159. 219-222 contributes to the UDP-N-acetyl-alpha-D-glucosamine binding site; the sequence is YLDA. A DXD motif motif is present at residues 221–223; the sequence is DAD. Aspartate 223 lines the Mn(2+) pocket. Glutamate 253 acts as the Proton acceptor in catalysis. Arginine 293 carries N-beta-linked (GlcNAc) arginine; by autocatalysis glycosylation. Residues asparagine 320 and serine 322 each coordinate Mn(2+). UDP-N-acetyl-alpha-D-glucosamine contacts are provided by residues serine 322 and 327 to 329; that span reads SSW.

It belongs to the glycosyltransferase NleB family. Mn(2+) serves as cofactor. In terms of processing, auto-glycosylated: arginine GlcNAcylation is required for activity toward death domain-containing host target proteins.

The protein resides in the secreted. It is found in the host cell. The catalysed reaction is L-arginyl-[protein] + UDP-N-acetyl-alpha-D-glucosamine = N(omega)-(N-acetyl-beta-D-glucosaminyl)-L-arginyl-[protein] + UDP + H(+). Functionally, protein-arginine N-acetylglucosaminyltransferase effector that disrupts TNF signaling in infected cells, including NF-kappa-B signaling, apoptosis and necroptosis. Acts by catalyzing the transfer of a single N-acetylglucosamine (GlcNAc) to a conserved arginine residue in the death domain of host proteins FADD, TNFRSF1A and RIPK1: arginine GlcNAcylation prevents homotypic/heterotypic death domain interactions and assembly of the oligomeric TNF-alpha receptor complex, thereby disrupting TNF signaling. Has preference for host FADD as substrate compared to TNFRSF1A and RIPK1. Also acts on host proteins without a death domain: catalyzes GlcNAcylation of host GAPDH protein, thereby preventing GAPDH interaction with TRAF2 and TRAF3, leading to inhibit NF-kappa-B signaling and type I interferon production, respectively. Also displays intra-bacterial activity by mediating GlcNAcylation of glutathione synthetase GshB. Catalyzes auto-GlcNAcylation, which is required for activity toward death domain-containing host target proteins. The chain is Protein-arginine N-acetylglucosaminyltransferase NleB from Citrobacter rodentium.